The primary structure comprises 209 residues: DNA ADP-ribosyl transferase (209 aa).

In terms of domain architecture, DarT spans 9–209 (TPIYHITHID…RVCIRKDWYY (201 aa)). NAD(+)-binding positions include 13-15 (HIT), Gly22, and Leu30. Residues 35-53 (SPPKQRSIAYAHIQERRNR) are NAD(+)-binding element. Residues 44–50 (YAHIQER) mediate DNA binding. Arg51 contacts NAD(+). The Proton acceptor role is filled by Arg51. DNA-binding regions lie at residues 75–80 (RSPMLY), 145–148 (SYWA), and 154–158 (REKKQ). An ADP-ribosylating turn-turn loop region spans residues 116–160 (TDRHGVLSHARFFRQLEELAQLDWEAIQASYWADPPELREKKQAE). Glu160 is an active-site residue.

It belongs to the DarT ADP-ribosyltransferase family. In terms of assembly, interacts with cognate antitoxin DarG (via C-terminus); this heterodimeric complex neutralizes the toxic effect of DarT by preventing ssDNA binding to DarT and consequently inactivating the toxin by direct protein-protein interactions.

The catalysed reaction is a thymidine in DNA + NAD(+) = an N-(ADP-alpha-D-ribosyl)-thymidine in DNA + nicotinamide + H(+). Functionally, toxic component of the hybrid type II/IV toxin-antitoxin (TA) system DarTG, which plays a crucial role in controlling bacterial growth and bacteriophage infection. In case of phage infection, DarT toxin ADP-ribosylates DNA, which inhibits both viral DNA and RNA synthesis and leads to abortive infection. ADP-ribosylates ssDNA on the second thymidine of the consensus sequence 5'-TNTC-3'; the protein does not auto-modify. Arg-51 is highly flexible, allowing it to assume multiple positions in the crystal structures. Its toxic effect is neutralized by cognate antitoxin DarG. This Thermus sp. (strain 2.9) protein is DNA ADP-ribosyl transferase.